We begin with the raw amino-acid sequence, 154 residues long: Prefoldin subunit alpha (154 aa).

This sequence belongs to the prefoldin alpha subunit family. As to quaternary structure, heterohexamer of two alpha and four beta subunits.

It localises to the cytoplasm. Functionally, molecular chaperone capable of stabilizing a range of proteins. Seems to fulfill an ATP-independent, HSP70-like function in archaeal de novo protein folding. This Hyperthermus butylicus (strain DSM 5456 / JCM 9403 / PLM1-5) protein is Prefoldin subunit alpha.